The sequence spans 138 residues: Glutaredoxin-like protein C5orf63 (138 aa).

Cysteine 41 and cysteine 44 are disulfide-bonded. Basic and acidic residues predominate over residues 55-64; it reads ENRQPYKDQK. The segment at 55-88 is disordered; the sequence is ENRQPYKDQKLPGTRRRRSPSSPSHPHMASQSGK.

The protein belongs to the glutaredoxin family. YDR286C subfamily.

The protein is Glutaredoxin-like protein C5orf63 (C5orf63) of Homo sapiens (Human).